We begin with the raw amino-acid sequence, 281 residues long: UPF0500 protein C1orf216 homolog (281 aa).

A compositionally biased stretch (polar residues) spans 1 to 12 (MFTIQKPDTVSH). The tract at residues 1–197 (MFTIQKPDTV…SSSDSDSISV (197 aa)) is disordered. Residues 45-74 (TYDKNENWSQDKKGGEEGENKSKSEDEHSS) show a composition bias toward basic and acidic residues. 3 stretches are compositionally biased toward low complexity: residues 92–102 (STGSEGISLSS), 147–161 (SSSL…VSAS), and 169–178 (PAPTTTPQEN). Residues 179 to 190 (PETEDSDVESSS) are compositionally biased toward acidic residues. Positions 198–257 (TLSEAFQSLQDKEKLKEREKEKHHAQLTMYRRLALLRWIRALQQKVRDQQNRLQESFDTI) form a coiled coil.

Belongs to the UPF0500 family.

This Xenopus laevis (African clawed frog) protein is UPF0500 protein C1orf216 homolog.